A 332-amino-acid polypeptide reads, in one-letter code: Ribosomal RNA small subunit methyltransferase H (332 aa).

S-adenosyl-L-methionine-binding positions include 36 to 38 (GGH), aspartate 61, phenylalanine 88, aspartate 114, and glutamine 121.

Belongs to the methyltransferase superfamily. RsmH family.

It localises to the cytoplasm. The catalysed reaction is cytidine(1402) in 16S rRNA + S-adenosyl-L-methionine = N(4)-methylcytidine(1402) in 16S rRNA + S-adenosyl-L-homocysteine + H(+). Specifically methylates the N4 position of cytidine in position 1402 (C1402) of 16S rRNA. This Pelodictyon phaeoclathratiforme (strain DSM 5477 / BU-1) protein is Ribosomal RNA small subunit methyltransferase H.